The sequence spans 346 residues: Small ribosomal subunit biogenesis GTPase RsgA 1 (346 aa).

A CP-type G domain is found at 93 to 248 (EEQLIAANFD…IIDTPGMREF (156 aa)). Residues 138-141 (TKAD) and 190-198 (GSSGVGKSS) contribute to the GTP site. Cys271, Cys276, His278, and Cys284 together coordinate Zn(2+).

Belongs to the TRAFAC class YlqF/YawG GTPase family. RsgA subfamily. In terms of assembly, monomer. Associates with 30S ribosomal subunit, binds 16S rRNA. It depends on Zn(2+) as a cofactor.

The protein localises to the cytoplasm. Functionally, one of several proteins that assist in the late maturation steps of the functional core of the 30S ribosomal subunit. Helps release RbfA from mature subunits. May play a role in the assembly of ribosomal proteins into the subunit. Circularly permuted GTPase that catalyzes slow GTP hydrolysis, GTPase activity is stimulated by the 30S ribosomal subunit. This is Small ribosomal subunit biogenesis GTPase RsgA 1 from Listeria innocua serovar 6a (strain ATCC BAA-680 / CLIP 11262).